We begin with the raw amino-acid sequence, 519 residues long: Maturase K (519 aa).

The protein belongs to the intron maturase 2 family. MatK subfamily.

The protein localises to the plastid. It is found in the chloroplast. In terms of biological role, usually encoded in the trnK tRNA gene intron. Probably assists in splicing its own and other chloroplast group II introns. The sequence is that of Maturase K from Cycas panzhihuaensis (Dukou cycad).